Consider the following 108-residue polypeptide: UPF0060 membrane protein Msil_1658 (108 aa).

Transmembrane regions (helical) follow at residues 5-25 (LVYVAAALAEIAGCFSFWAWL), 31-51 (SLWLIPGTASLLLFAWLLTLI), 62-82 (AYGGVYVTVSLLWLWAMEGVW), and 88-108 (LGGATLCLIGAAIIILAPRPA).

Belongs to the UPF0060 family.

Its subcellular location is the cell inner membrane. This is UPF0060 membrane protein Msil_1658 from Methylocella silvestris (strain DSM 15510 / CIP 108128 / LMG 27833 / NCIMB 13906 / BL2).